A 66-amino-acid chain; its full sequence is Putative alpha-neurotoxin RjAa44 (66 aa).

One can recognise an LCN-type CS-alpha/beta domain in the interval 1–60 (KEGYPVDWGNCKYECMSDAYCKDLCADRKAKSGYCYKLNWSCYCEGLPDDSPIKTNGHCR). Cystine bridges form between cysteine 11–cysteine 59, cysteine 15–cysteine 35, cysteine 21–cysteine 42, and cysteine 25–cysteine 44.

The protein belongs to the long (4 C-C) scorpion toxin superfamily. Sodium channel inhibitor family. Alpha subfamily. In terms of tissue distribution, expressed by the venom gland.

It is found in the secreted. In terms of biological role, alpha toxins bind voltage-independently at site-3 of sodium channels (Nav) and inhibit the inactivation of the activated channels, thereby blocking neuronal transmission. The protein is Putative alpha-neurotoxin RjAa44 of Rhopalurus junceus (Caribbean blue scorpion).